A 350-amino-acid chain; its full sequence is Phospho-N-acetylmuramoyl-pentapeptide-transferase (350 aa).

9 consecutive transmembrane segments (helical) span residues L28–L48, G70–I90, L100–S120, L136–I156, F164–A184, L195–M215, G221–V241, A249–L269, and Q328–L348.

This sequence belongs to the glycosyltransferase 4 family. MraY subfamily. It depends on Mg(2+) as a cofactor.

Its subcellular location is the cell inner membrane. The enzyme catalyses UDP-N-acetyl-alpha-D-muramoyl-L-alanyl-gamma-D-glutamyl-meso-2,6-diaminopimeloyl-D-alanyl-D-alanine + di-trans,octa-cis-undecaprenyl phosphate = di-trans,octa-cis-undecaprenyl diphospho-N-acetyl-alpha-D-muramoyl-L-alanyl-D-glutamyl-meso-2,6-diaminopimeloyl-D-alanyl-D-alanine + UMP. Its pathway is cell wall biogenesis; peptidoglycan biosynthesis. Its function is as follows. Catalyzes the initial step of the lipid cycle reactions in the biosynthesis of the cell wall peptidoglycan: transfers peptidoglycan precursor phospho-MurNAc-pentapeptide from UDP-MurNAc-pentapeptide onto the lipid carrier undecaprenyl phosphate, yielding undecaprenyl-pyrophosphoryl-MurNAc-pentapeptide, known as lipid I. The protein is Phospho-N-acetylmuramoyl-pentapeptide-transferase of Synechococcus sp. (strain CC9605).